Consider the following 349-residue polypeptide: Isopentenyl-diphosphate delta-isomerase (349 aa).

Residue 6 to 7 (RK) coordinates substrate. Residues 62–64 (AMT), S93, and N122 contribute to the FMN site. Q152 lines the substrate pocket. E153 is a Mg(2+) binding site. FMN-binding positions include K184, T214, 258–259 (GG), and 280–281 (AG).

Belongs to the IPP isomerase type 2 family. In terms of assembly, homooctamer. Dimer of tetramers. It depends on FMN as a cofactor. NADPH is required as a cofactor. The cofactor is Mg(2+).

It is found in the cytoplasm. The catalysed reaction is isopentenyl diphosphate = dimethylallyl diphosphate. Functionally, involved in the biosynthesis of isoprenoids. Catalyzes the 1,3-allylic rearrangement of the homoallylic substrate isopentenyl (IPP) to its allylic isomer, dimethylallyl diphosphate (DMAPP). The chain is Isopentenyl-diphosphate delta-isomerase from Bacillus cereus (strain ZK / E33L).